Consider the following 561-residue polypeptide: MTTTSKTSLQEEYVIDAVDHRGFSARRSITGRWRAAWFIIGVEVAERFANYGIGSNLISYLTGPLGQSTAVAAANVNAWSGISTILPLLGAFVADAFLGRYITIIIASFIYVLGLAFLTLSAFLIPNNTEVTSSPSSFLNALFFFSLYLVAIGQSGHKPCVQAFGADQFDEKNPQENSDRSSFFNWWYLSMCAGIGLAILVVVYIQENVSWALGFGIPCVFMVISLVLFVLGRKSYRFSKTRQEEETNPFTRIGRVFFVAFKNQRLNSSDLCKVELIEANRSQESPEELSFLNKALLVPNDSDEGEVACKSRDVEDATALVRLIPVWLTTLAYAIPFAQYMTFFTKQGVTMERTIFPGVEIPPASLQVLISISIVLFVPIYDRVLVPIGRSITKDPCGITTLKRIGTGMVLATLTMVVAALVESKRLETAKEYGLIDQPKTTLPMSIWWLFPQYMLLGLADVHTLVGMQEFFYSQVPTELRSLGLAIYLSAMGVGSLLSSLLIYLIDLATGGDAGNSWFNSNLNRAHLDYFYWLLAVVSAVGFFTFLFISKSYIYRRVDVV.

Residues 78–98 (AWSGISTILPLLGAFVADAFL) traverse the membrane as a helical segment. Thr-103 carries the post-translational modification Phosphothreonine. Helical transmembrane passes span 104-124 (IIIA…SAFL), 133-153 (SSPS…VAIG), 183-203 (FFNW…LVVV), 211-231 (WALG…LFVL), 324-344 (IPVW…MTFF), 361-381 (IPPA…VPIY), 405-425 (IGTG…VESK), 447-467 (IWWL…TLVG), 486-506 (AIYL…IYLI), and 530-550 (YFYW…LFIS).

The protein belongs to the major facilitator superfamily. Proton-dependent oligopeptide transporter (POT/PTR) (TC 2.A.17) family. In terms of tissue distribution, expressed in roots, flowers and siliques. Detected in stems and leaves.

The protein localises to the membrane. The sequence is that of Protein NRT1/ PTR FAMILY 5.13 (NPF5.13) from Arabidopsis thaliana (Mouse-ear cress).